The following is a 143-amino-acid chain: Transcriptional regulator MraZ (143 aa).

2 SpoVT-AbrB domains span residues 5-47 (EYQH…PMSE) and 76-119 (ATEC…SKEI).

This sequence belongs to the MraZ family. In terms of assembly, forms oligomers.

The protein localises to the cytoplasm. The protein resides in the nucleoid. This Bacillus licheniformis (strain ATCC 14580 / DSM 13 / JCM 2505 / CCUG 7422 / NBRC 12200 / NCIMB 9375 / NCTC 10341 / NRRL NRS-1264 / Gibson 46) protein is Transcriptional regulator MraZ.